Here is a 519-residue protein sequence, read N- to C-terminus: Maturase K (519 aa).

It belongs to the intron maturase 2 family. MatK subfamily.

It is found in the plastid. Its subcellular location is the chloroplast. Functionally, usually encoded in the trnK tRNA gene intron. Probably assists in splicing its own and other chloroplast group II introns. This chain is Maturase K, found in Dioscorea elephantipes (Elephant's foot yam).